A 426-amino-acid polypeptide reads, in one-letter code: 3-phosphoshikimate 1-carboxyvinyltransferase (426 aa).

Positions 22, 23, and 27 each coordinate 3-phosphoshikimate. Lys22 serves as a coordination point for phosphoenolpyruvate. Residues Gly96 and Arg124 each coordinate phosphoenolpyruvate. 3-phosphoshikimate-binding residues include Ser170, Ser171, Gln172, Ser198, Asp314, Asn337, and Lys341. Gln172 provides a ligand contact to phosphoenolpyruvate. The Proton acceptor role is filled by Asp314. The phosphoenolpyruvate site is built by Arg345, Arg387, and Lys412.

Belongs to the EPSP synthase family. In terms of assembly, monomer.

The protein resides in the cytoplasm. It catalyses the reaction 3-phosphoshikimate + phosphoenolpyruvate = 5-O-(1-carboxyvinyl)-3-phosphoshikimate + phosphate. It functions in the pathway metabolic intermediate biosynthesis; chorismate biosynthesis; chorismate from D-erythrose 4-phosphate and phosphoenolpyruvate: step 6/7. Functionally, catalyzes the transfer of the enolpyruvyl moiety of phosphoenolpyruvate (PEP) to the 5-hydroxyl of shikimate-3-phosphate (S3P) to produce enolpyruvyl shikimate-3-phosphate and inorganic phosphate. This is 3-phosphoshikimate 1-carboxyvinyltransferase from Aliivibrio fischeri (strain MJ11) (Vibrio fischeri).